Here is a 178-residue protein sequence, read N- to C-terminus: Large ribosomal subunit protein uL6 (178 aa).

The protein belongs to the universal ribosomal protein uL6 family. As to quaternary structure, part of the 50S ribosomal subunit.

Its function is as follows. This protein binds to the 23S rRNA, and is important in its secondary structure. It is located near the subunit interface in the base of the L7/L12 stalk, and near the tRNA binding site of the peptidyltransferase center. This chain is Large ribosomal subunit protein uL6, found in Campylobacter concisus (strain 13826).